The primary structure comprises 163 residues: Phosphopantetheine adenylyltransferase (163 aa).

Substrate is bound at residue Ser9. Residues Ser9–Phe10 and His17 contribute to the ATP site. Residues Lys41, Leu73, and Lys87 each coordinate substrate. ATP contacts are provided by residues Gly88 to Arg90, Glu98, and Tyr124 to Thr130.

It belongs to the bacterial CoaD family. Homohexamer. It depends on Mg(2+) as a cofactor.

Its subcellular location is the cytoplasm. It catalyses the reaction (R)-4'-phosphopantetheine + ATP + H(+) = 3'-dephospho-CoA + diphosphate. Its pathway is cofactor biosynthesis; coenzyme A biosynthesis; CoA from (R)-pantothenate: step 4/5. Functionally, reversibly transfers an adenylyl group from ATP to 4'-phosphopantetheine, yielding dephospho-CoA (dPCoA) and pyrophosphate. The chain is Phosphopantetheine adenylyltransferase from Fusobacterium nucleatum subsp. nucleatum (strain ATCC 25586 / DSM 15643 / BCRC 10681 / CIP 101130 / JCM 8532 / KCTC 2640 / LMG 13131 / VPI 4355).